Reading from the N-terminus, the 455-residue chain is UDP-N-acetylmuramoylalanine--D-glutamate ligase (455 aa).

118–124 (GTNGKST) contributes to the ATP binding site.

The protein belongs to the MurCDEF family.

The protein localises to the cytoplasm. It carries out the reaction UDP-N-acetyl-alpha-D-muramoyl-L-alanine + D-glutamate + ATP = UDP-N-acetyl-alpha-D-muramoyl-L-alanyl-D-glutamate + ADP + phosphate + H(+). The protein operates within cell wall biogenesis; peptidoglycan biosynthesis. Its function is as follows. Cell wall formation. Catalyzes the addition of glutamate to the nucleotide precursor UDP-N-acetylmuramoyl-L-alanine (UMA). The polypeptide is UDP-N-acetylmuramoylalanine--D-glutamate ligase (Myxococcus xanthus (strain DK1622)).